A 317-amino-acid polypeptide reads, in one-letter code: Melanocyte-stimulating hormone receptor (317 aa).

The Extracellular portion of the chain corresponds to 1 to 37 (MPAQGSQRSLLGSLNSTLMATSSLGLSANQSGPQCLE). N-linked (GlcNAc...) asparagine glycans are attached at residues N15 and N29. Residues 38–63 (VSVPDGLFLCLGLVSLVENMLVVAAI) form a helical membrane-spanning segment. Residues 64 to 72 (AKNRNLHSP) lie on the Cytoplasmic side of the membrane. The chain crosses the membrane as a helical span at residues 73–93 (MYCFICCLALSDLLVSVSNVL). Topologically, residues 94–118 (ETAVMLLLEAGALAAQATVVQQLDN) are extracellular. Residues 119 to 140 (IIDVLVCSSMVSSLCFLGAIAM) form a helical membrane-spanning segment. Residues 141-163 (DRYISIFYALRYHSIVTLSRAQW) are Cytoplasmic-facing. The helical transmembrane segment at 164–183 (ATAAVWAAGILSSTLFIAYY) threads the bilayer. Topologically, residues 184–191 (DHTAVLLC) are extracellular. A helical membrane pass occupies residues 192 to 211 (LVVFFLAMLVLMAVLYAHML). At 212-240 (TQACQHVQGITRLHKRQHLVQQGFGLKGA) the chain is on the cytoplasmic side. Residues 241 to 266 (ATLTILLGVFLLCWGPFFLHLTLIAV) form a helical membrane-spanning segment. Residues 267 to 279 (CPQHPTCSCVFKN) are Extracellular-facing. A helical membrane pass occupies residues 280-300 (FKLFLALIICNAIVDPLIYAF). Topologically, residues 301 to 317 (RXQELRKTLKEVLLFSW) are cytoplasmic.

Belongs to the G-protein coupled receptor 1 family. In terms of assembly, interacts with MGRN1, but does not undergo MGRN1-mediated ubiquitination; this interaction competes with GNAS-binding and thus inhibits agonist-induced cAMP production. Interacts with OPN3; the interaction results in a decrease in MC1R-mediated cAMP signaling and ultimately a decrease in melanin production in melanocytes.

Its subcellular location is the cell membrane. Functionally, receptor for MSH (alpha, beta and gamma) and ACTH. The activity of this receptor is mediated by G proteins which activate adenylate cyclase. Mediates melanogenesis, the production of eumelanin (black/brown) and phaeomelanin (red/yellow), via regulation of cAMP signaling in melanocytes. This is Melanocyte-stimulating hormone receptor (MC1R) from Loris tardigradus (Slender loris).